Here is a 424-residue protein sequence, read N- to C-terminus: UDP-N-acetylglucosamine 1-carboxyvinyltransferase (424 aa).

Phosphoenolpyruvate is bound at residue 22 to 23; that stretch reads KN. Arg98 lines the UDP-N-acetyl-alpha-D-glucosamine pocket. Residue Cys122 is the Proton donor of the active site. Cys122 carries the 2-(S-cysteinyl)pyruvic acid O-phosphothioketal modification. Residues 127–131, Asp312, and Ile334 contribute to the UDP-N-acetyl-alpha-D-glucosamine site; that span reads RPVDQ.

The protein belongs to the EPSP synthase family. MurA subfamily.

The protein localises to the cytoplasm. It carries out the reaction phosphoenolpyruvate + UDP-N-acetyl-alpha-D-glucosamine = UDP-N-acetyl-3-O-(1-carboxyvinyl)-alpha-D-glucosamine + phosphate. It participates in cell wall biogenesis; peptidoglycan biosynthesis. In terms of biological role, cell wall formation. Adds enolpyruvyl to UDP-N-acetylglucosamine. In Xanthomonas campestris pv. campestris (strain 8004), this protein is UDP-N-acetylglucosamine 1-carboxyvinyltransferase.